Consider the following 611-residue polypeptide: Vitamin B12 transporter BtuB (611 aa).

The N-terminal stretch at 1–22 is a signal peptide; that stretch reads MQKSALAIALASLLTPISYLHA. The TonB box signature appears at 29–36; sequence ETVVVTAN. The 114-residue stretch at 41–154 folds into the TBDR plug domain; the sequence is KASSTLADVE…IGGVINIITK (114 aa). One can recognise a TBDR beta-barrel domain in the interval 159 to 611; sequence QQGTTVSAGL…AYYLNIGYQF (453 aa). The short motif at 594–611 is the TonB C-terminal box element; the sequence is NGYPAAERAYYLNIGYQF.

This sequence belongs to the TonB-dependent receptor family. BtuB (TC 1.B.14.3.1) subfamily.

The protein localises to the cell outer membrane. Functionally, involved in the active translocation of vitamin B12 (cyanocobalamin) across the outer membrane to the periplasmic space. It derives its energy for transport by interacting with the trans-periplasmic membrane protein TonB. The protein is Vitamin B12 transporter BtuB of Vibrio cholerae serotype O1 (strain ATCC 39541 / Classical Ogawa 395 / O395).